The chain runs to 554 residues: Hydroxylamine reductase (554 aa).

The [2Fe-2S] cluster site is built by C3, C6, C18, and C25. Hybrid [4Fe-2O-2S] cluster contacts are provided by H252, E276, C320, C408, C436, C461, E495, and K497. A Cysteine persulfide modification is found at C408.

The protein belongs to the HCP family. [2Fe-2S] cluster serves as cofactor. It depends on hybrid [4Fe-2O-2S] cluster as a cofactor.

The protein localises to the cytoplasm. It catalyses the reaction A + NH4(+) + H2O = hydroxylamine + AH2 + H(+). Functionally, catalyzes the reduction of hydroxylamine to form NH(3) and H(2)O. The protein is Hydroxylamine reductase of Shewanella loihica (strain ATCC BAA-1088 / PV-4).